Reading from the N-terminus, the 381-residue chain is Opsin Rh2 (381 aa).

At 1 to 56 (MERSLLPEPPLAMALLGPRFEAQTGGNRSVLDNVLPDMAPLVNPYWSRFAPMDPTM) the chain is on the extracellular side. Asparagine 27 is a glycosylation site (N-linked (GlcNAc...) asparagine). The chain crosses the membrane as a helical span at residues 57 to 81 (SKILGLFTLVILIISCCGNGVVVYI). Over 82–93 (FGGTKSLRTPAN) the chain is Cytoplasmic. A helical transmembrane segment spans residues 94-119 (LLVLNLAFSDFCMMASQSPVMIINFY). Topologically, residues 120–133 (YETWVLGPLWCDIY) are extracellular. Cysteine 130 and cysteine 207 form a disulfide bridge. The chain crosses the membrane as a helical span at residues 134-153 (AACGSLFGCVSIWSMCMIAF). Residues 154–172 (DRYNVIVKGINGTPMTIKT) lie on the Cytoplasmic side of the membrane. A helical membrane pass occupies residues 173–196 (SIMKIAFIWMMAVFWTIMPLIGWS). Residues 197–220 (SYVPEGNLTACSIDYMTRQWNPRS) are Extracellular-facing. Residues 221 to 248 (YLITYSLFVYYTPLFMICYSYWFIIATV) form a helical membrane-spanning segment. Topologically, residues 249–283 (AAHEKAMRDQAKKMNVKSLRSSEDCDKSAENKLAK) are cytoplasmic. The helical transmembrane segment at 284–307 (VALTTISLWFMAWTPYLIICYFGL) threads the bilayer. The Extracellular segment spans residues 308-314 (FKIDGLT). Residues 315-339 (PLTTIWGATFAKTSAVYNPIVYGIS) form a helical membrane-spanning segment. Position 326 is an N6-(retinylidene)lysine (lysine 326). The Cytoplasmic segment spans residues 340–381 (HPKYRLVLKEKCPMCVCGSTDEPKPDAPPSDTETTSEAESKA). The tract at residues 358-381 (STDEPKPDAPPSDTETTSEAESKA) is disordered. Residues 370-381 (DTETTSEAESKA) are compositionally biased toward polar residues.

It belongs to the G-protein coupled receptor 1 family. Opsin subfamily. Post-translationally, some or all of the Ser/Thr residues present in the C-terminal part may be phosphorylated.

Its subcellular location is the membrane. Functionally, visual pigments are the light-absorbing molecules that mediate vision. They consist of an apoprotein, opsin, covalently linked to cis-retinal. In Drosophila pseudoobscura pseudoobscura (Fruit fly), this protein is Opsin Rh2 (Rh2).